Here is a 162-residue protein sequence, read N- to C-terminus: Transcription elongation factor GreA (162 aa).

Residues 45-74 (ENAEYEAAREKQAFIEGRIKELEDMTARAE) adopt a coiled-coil conformation.

It belongs to the GreA/GreB family.

Necessary for efficient RNA polymerase transcription elongation past template-encoded arresting sites. The arresting sites in DNA have the property of trapping a certain fraction of elongating RNA polymerases that pass through, resulting in locked ternary complexes. Cleavage of the nascent transcript by cleavage factors such as GreA or GreB allows the resumption of elongation from the new 3'terminus. GreA releases sequences of 2 to 3 nucleotides. The sequence is that of Transcription elongation factor GreA from Rickettsia felis (strain ATCC VR-1525 / URRWXCal2) (Rickettsia azadi).